A 323-amino-acid chain; its full sequence is Probable proline iminopeptidase (323 aa).

The 265-residue stretch at 37 to 301 (VVLHGGPGSR…VIVDEAGHDA (265 aa)) folds into the AB hydrolase-1 domain. The active-site Nucleophile is serine 114. Aspartate 271 is a catalytic residue. Histidine 299 functions as the Proton donor in the catalytic mechanism.

Belongs to the peptidase S33 family.

It is found in the cytoplasm. It carries out the reaction Release of N-terminal proline from a peptide.. Its function is as follows. Specifically catalyzes the removal of N-terminal proline residues from peptides. The chain is Probable proline iminopeptidase from Streptomyces coelicolor (strain ATCC BAA-471 / A3(2) / M145).